Here is an 835-residue protein sequence, read N- to C-terminus: Protein translocase subunit SecA (835 aa).

Residues glutamine 85, 103–107 (GEGKT), and aspartate 492 contribute to the ATP site. Residues cysteine 819, cysteine 821, cysteine 830, and cysteine 831 each coordinate Zn(2+).

Belongs to the SecA family. As to quaternary structure, monomer and homodimer. Part of the essential Sec protein translocation apparatus which comprises SecA, SecYEG and auxiliary proteins SecDF. Other proteins may also be involved. Zn(2+) serves as cofactor.

The protein localises to the cell membrane. It is found in the cytoplasm. It catalyses the reaction ATP + H2O + cellular proteinSide 1 = ADP + phosphate + cellular proteinSide 2.. Its function is as follows. Part of the Sec protein translocase complex. Interacts with the SecYEG preprotein conducting channel. Has a central role in coupling the hydrolysis of ATP to the transfer of proteins into and across the cell membrane, serving as an ATP-driven molecular motor driving the stepwise translocation of polypeptide chains across the membrane. The sequence is that of Protein translocase subunit SecA from Clostridium botulinum (strain Kyoto / Type A2).